A 266-amino-acid chain; its full sequence is Glutamate racemase (266 aa).

Substrate contacts are provided by residues 9–10 (DS) and 41–42 (YG). The active-site Proton donor/acceptor is the Cys-73. A substrate-binding site is contributed by 74-75 (NS). The active-site Proton donor/acceptor is Cys-183. Position 184–185 (184–185 (TH)) interacts with substrate.

The protein belongs to the aspartate/glutamate racemases family.

It carries out the reaction L-glutamate = D-glutamate. It participates in cell wall biogenesis; peptidoglycan biosynthesis. Functionally, provides the (R)-glutamate required for cell wall biosynthesis. The sequence is that of Glutamate racemase from Shewanella loihica (strain ATCC BAA-1088 / PV-4).